Here is a 481-residue protein sequence, read N- to C-terminus: Aspartyl/glutamyl-tRNA(Asn/Gln) amidotransferase subunit B (481 aa).

Belongs to the GatB/GatE family. GatB subfamily. As to quaternary structure, heterotrimer of A, B and C subunits.

The catalysed reaction is L-glutamyl-tRNA(Gln) + L-glutamine + ATP + H2O = L-glutaminyl-tRNA(Gln) + L-glutamate + ADP + phosphate + H(+). The enzyme catalyses L-aspartyl-tRNA(Asn) + L-glutamine + ATP + H2O = L-asparaginyl-tRNA(Asn) + L-glutamate + ADP + phosphate + 2 H(+). Its function is as follows. Allows the formation of correctly charged Asn-tRNA(Asn) or Gln-tRNA(Gln) through the transamidation of misacylated Asp-tRNA(Asn) or Glu-tRNA(Gln) in organisms which lack either or both of asparaginyl-tRNA or glutaminyl-tRNA synthetases. The reaction takes place in the presence of glutamine and ATP through an activated phospho-Asp-tRNA(Asn) or phospho-Glu-tRNA(Gln). The protein is Aspartyl/glutamyl-tRNA(Asn/Gln) amidotransferase subunit B of Carboxydothermus hydrogenoformans (strain ATCC BAA-161 / DSM 6008 / Z-2901).